The following is a 173-amino-acid chain: NADH-ubiquinone oxidoreductase chain 6 (173 aa).

The next 5 helical transmembrane spans lie at 1 to 21, 25 to 45, 53 to 73, 82 to 102, and 141 to 161; these read MVYFMFIMLVGLILGLMAVAS, PYFAALGLVVAAGVGCGLLVG, LVLFLIYLGGMLVVFAYTAAL, WGDWSVLLYVSVYLLGIFFVG, and GIMLVLGGWVLLLTLFVILEL.

The protein belongs to the complex I subunit 6 family.

The protein localises to the mitochondrion membrane. It catalyses the reaction a ubiquinone + NADH + 5 H(+)(in) = a ubiquinol + NAD(+) + 4 H(+)(out). Functionally, core subunit of the mitochondrial membrane respiratory chain NADH dehydrogenase (Complex I) that is believed to belong to the minimal assembly required for catalysis. Complex I functions in the transfer of electrons from NADH to the respiratory chain. The immediate electron acceptor for the enzyme is believed to be ubiquinone. The polypeptide is NADH-ubiquinone oxidoreductase chain 6 (MT-ND6) (Squalus acanthias (Spiny dogfish)).